Reading from the N-terminus, the 70-residue chain is UPF0270 protein VP2791 (70 aa).

It belongs to the UPF0270 family.

In Vibrio parahaemolyticus serotype O3:K6 (strain RIMD 2210633), this protein is UPF0270 protein VP2791.